A 501-amino-acid polypeptide reads, in one-letter code: Pyruvate kinase (501 aa).

Residue Arg50 coordinates substrate. K(+)-binding residues include Asn52, Ser54, Asp85, and Thr86. 52 to 55 (NFSH) is an ATP binding site. ATP-binding residues include Arg92 and Lys178. Glu243 is a binding site for Mg(2+). Residues Gly266, Asp267, and Thr299 each coordinate substrate. Asp267 contributes to the Mg(2+) binding site.

It belongs to the pyruvate kinase family. Homotetramer. Mg(2+) is required as a cofactor. It depends on K(+) as a cofactor.

It catalyses the reaction pyruvate + ATP = phosphoenolpyruvate + ADP + H(+). It participates in carbohydrate degradation; glycolysis; pyruvate from D-glyceraldehyde 3-phosphate: step 5/5. This Kluyveromyces lactis (strain ATCC 8585 / CBS 2359 / DSM 70799 / NBRC 1267 / NRRL Y-1140 / WM37) (Yeast) protein is Pyruvate kinase (PYK1).